Reading from the N-terminus, the 674-residue chain is Translation factor GUF1, mitochondrial (674 aa).

The N-terminal 33 residues, 1 to 33 (MLRPWFCFRSCVSLLSNRRQYGFRYLATAEPSK), are a transit peptide targeting the mitochondrion. The tract at residues 32-51 (SKSEKPAKPVKPAKPMSVQE) is disordered. The region spanning 75 to 257 (QNYRNFSIVA…SIIKNIPAPV (183 aa)) is the tr-type G domain. Residues 84 to 91 (AHVDHGKS), 150 to 154 (DTPGH), and 204 to 207 (NKID) contribute to the GTP site.

The protein belongs to the TRAFAC class translation factor GTPase superfamily. Classic translation factor GTPase family. LepA subfamily.

It localises to the mitochondrion inner membrane. The enzyme catalyses GTP + H2O = GDP + phosphate + H(+). Promotes mitochondrial protein synthesis. May act as a fidelity factor of the translation reaction, by catalyzing a one-codon backward translocation of tRNAs on improperly translocated ribosomes. Binds to mitochondrial ribosomes in a GTP-dependent manner. In Lodderomyces elongisporus (strain ATCC 11503 / CBS 2605 / JCM 1781 / NBRC 1676 / NRRL YB-4239) (Yeast), this protein is Translation factor GUF1, mitochondrial.